The sequence spans 537 residues: O-phosphoserine--tRNA(Cys) ligase (537 aa).

Substrate contacts are provided by residues 186–188 (HMT), 231–233 (SAS), 273–274 (YY), and Asn-317.

The protein belongs to the class-II aminoacyl-tRNA synthetase family. O-phosphoseryl-tRNA(Cys) synthetase subfamily. As to quaternary structure, homotetramer. Interacts with SepCysS.

It catalyses the reaction tRNA(Cys) + O-phospho-L-serine + ATP = O-phospho-L-seryl-tRNA(Cys) + AMP + diphosphate. Functionally, catalyzes the attachment of O-phosphoserine (Sep) to tRNA(Cys). This chain is O-phosphoserine--tRNA(Cys) ligase, found in Methanococcus maripaludis (strain C7 / ATCC BAA-1331).